The sequence spans 774 residues: E3 ubiquitin-protein ligase RFWD3 (774 aa).

Disordered regions lie at residues 32 to 126 and 203 to 281; these read GTIE…TAGA and PYPL…SAME. Residues S59 and S75 each carry the phosphoserine; by ATM and ATR modification. The span at 92 to 103 shows a compositional bias: acidic residues; the sequence is LTEEVQPSEENM. Over residues 108–121 the composition is skewed to polar residues; it reads PGTSEEPSQGSGAN. A compositionally biased stretch (acidic residues) spans 223–242; sequence SDSDGSAEDEEVVVQAEEPE. An RING-type; degenerate zinc finger spans residues 288 to 332; sequence CTICLEQWTNAGDHRISALRCGHLFGFRCISKWLKGQTRKCPQCN. Residues 358 to 403 are a coiled coil; that stretch reads RMKSDLLNEQMLRKQAELESAQCRLQLQVLIDKCTKLNSRVQDLEK. 3 WD repeats span residues 493-535, 536-568, and 583-628; these read IPMH…VVQT, YNTGRPVWSCCWCLDENNYVYAGLASGSILIYD, and KARC…SHKP.

In terms of assembly, interacts with MDM2 and p53/TP53. Binds to the RPA complex via direct interaction with RPA2. Interacts with RAD51. In terms of processing, phosphorylated at Ser-59 and Ser-75 upon DNA damage by ATM or ATR. ATM phosphorylation occurs at early times upon DNA damage, while ATR is the major kinase at later times. Phosphorylation by ATM and ATR is required to stabilize p53/TP53. Part of the phosphorylation depends upon RPA2 presence.

It localises to the nucleus. Its subcellular location is the PML body. It is found in the cytoplasm. The catalysed reaction is S-ubiquitinyl-[E2 ubiquitin-conjugating enzyme]-L-cysteine + [acceptor protein]-L-lysine = [E2 ubiquitin-conjugating enzyme]-L-cysteine + N(6)-ubiquitinyl-[acceptor protein]-L-lysine.. It functions in the pathway protein modification; protein ubiquitination. Functionally, E3 ubiquitin-protein ligase required for the repair of DNA interstrand cross-links (ICL) in response to DNA damage. Plays a key role in RPA-mediated DNA damage signaling and repair. Acts by mediating ubiquitination of the RPA complex (RPA1, RPA2 and RPA3 subunits) and RAD51 at stalled replication forks, leading to remove them from DNA damage sites and promote homologous recombination. Also mediates the ubiquitination of p53/TP53 in the late response to DNA damage, and acts as a positive regulator of p53/TP53 stability, thereby regulating the G1/S DNA damage checkpoint. May act by catalyzing the formation of short polyubiquitin chains on p53/TP53 that are not targeted to the proteasome. In response to ionizing radiation, interacts with MDM2 and enhances p53/TP53 ubiquitination, possibly by restricting MDM2 from extending polyubiquitin chains on ubiquitinated p53/TP53. Required to translesion DNA synthesis across DNA-protein cross-link adducts by catalyzing ubiquitination of proteins on single-stranded DNA (ssDNA). The protein is E3 ubiquitin-protein ligase RFWD3 (Rfwd3) of Mus musculus (Mouse).